Consider the following 283-residue polypeptide: Elongation factor Ts (283 aa).

Residues 80 to 83 form an involved in Mg(2+) ion dislocation from EF-Tu region; it reads TDFV.

The protein belongs to the EF-Ts family.

The protein resides in the cytoplasm. Functionally, associates with the EF-Tu.GDP complex and induces the exchange of GDP to GTP. It remains bound to the aminoacyl-tRNA.EF-Tu.GTP complex up to the GTP hydrolysis stage on the ribosome. The sequence is that of Elongation factor Ts from Actinobacillus succinogenes (strain ATCC 55618 / DSM 22257 / CCUG 43843 / 130Z).